We begin with the raw amino-acid sequence, 61 residues long: Large ribosomal subunit protein bL32 (61 aa).

The interval Met-1–Asp-20 is disordered. A compositionally biased stretch (basic residues) spans Lys-7–His-19.

This sequence belongs to the bacterial ribosomal protein bL32 family.

In Buchnera aphidicola subsp. Cinara cedri (strain Cc), this protein is Large ribosomal subunit protein bL32.